Consider the following 238-residue polypeptide: Probable transcriptional regulatory protein CF0838 (238 aa).

It belongs to the TACO1 family.

It localises to the cytoplasm. This chain is Probable transcriptional regulatory protein CF0838, found in Chlamydia felis (strain Fe/C-56) (Chlamydophila felis).